Reading from the N-terminus, the 432-residue chain is Enolase (432 aa).

Residue Q166 participates in (2R)-2-phosphoglycerate binding. E210 functions as the Proton donor in the catalytic mechanism. Mg(2+) contacts are provided by D247, E288, and D315. Positions 340, 369, 370, and 391 each coordinate (2R)-2-phosphoglycerate. The active-site Proton acceptor is K340.

It belongs to the enolase family. Mg(2+) is required as a cofactor.

It is found in the cytoplasm. The protein resides in the secreted. The protein localises to the cell surface. The catalysed reaction is (2R)-2-phosphoglycerate = phosphoenolpyruvate + H2O. The protein operates within carbohydrate degradation; glycolysis; pyruvate from D-glyceraldehyde 3-phosphate: step 4/5. Its function is as follows. Catalyzes the reversible conversion of 2-phosphoglycerate (2-PG) into phosphoenolpyruvate (PEP). It is essential for the degradation of carbohydrates via glycolysis. This chain is Enolase, found in Aeropyrum pernix (strain ATCC 700893 / DSM 11879 / JCM 9820 / NBRC 100138 / K1).